Here is a 132-residue protein sequence, read N- to C-terminus: Inclusion membrane protein E (132 aa).

2 consecutive transmembrane segments (helical) span residues 41–61 and 66–86; these read LGVV…AVGV and FALG…ATSA.

The protein localises to the secreted. Its subcellular location is the host vacuole. It is found in the host pathogen-containing vacuole. The protein resides in the host pathogen-containing vacuole membrane. In terms of biological role, inclusion membrane protein probably involved in early modification events of the chlamydial inclusion. This Chlamydia trachomatis serovar L2 (strain ATCC VR-902B / DSM 19102 / 434/Bu) protein is Inclusion membrane protein E.